We begin with the raw amino-acid sequence, 524 residues long: Alkaline phosphatase, tissue-nonspecific isozyme (524 aa).

The first 17 residues, Met-1–Ser-17, serve as a signal peptide directing secretion. Asp-60 serves as a coordination point for Mg(2+). Residues Asp-60 and Ser-110 each coordinate Zn(2+). Residue Ser-110 is the Phosphoserine intermediate of the active site. Ser-110 is modified (phosphoserine). Cys-139 and Cys-201 are disulfide-bonded. An N-linked (GlcNAc...) asparagine glycan is attached at Asn-140. Thr-173 provides a ligand contact to Mg(2+). The N-linked (GlcNAc...) asparagine glycan is linked to Asn-230. Glu-235 contributes to the Ca(2+) binding site. An N-linked (GlcNAc...) asparagine glycan is attached at Asn-271. Phe-290 and Glu-291 together coordinate Ca(2+). Asn-302 carries an N-linked (GlcNAc...) asparagine glycan. A Ca(2+)-binding site is contributed by Asp-306. Glu-332 serves as a coordination point for Mg(2+). 4 residues coordinate Zn(2+): Asp-337, His-341, Asp-378, and His-379. Asn-430 is a glycosylation site (N-linked (GlcNAc...) asparagine). His-454 provides a ligand contact to Zn(2+). A disulfide bridge connects residues Cys-489 and Cys-497. Ser-499 carries GPI-anchor amidated serine lipidation. The propeptide at Ala-500–Phe-524 is removed in mature form.

Belongs to the alkaline phosphatase family. As to quaternary structure, homodimer. Mg(2+) serves as cofactor. It depends on Zn(2+) as a cofactor. Requires Ca(2+) as cofactor. In terms of processing, N-glycosylated.

It is found in the cell membrane. The protein resides in the extracellular vesicle membrane. The protein localises to the mitochondrion membrane. Its subcellular location is the mitochondrion intermembrane space. The catalysed reaction is a phosphate monoester + H2O = an alcohol + phosphate. The enzyme catalyses diphosphate + H2O = 2 phosphate + H(+). It catalyses the reaction pyridoxal 5'-phosphate + H2O = pyridoxal + phosphate. It carries out the reaction phosphoethanolamine + H2O = ethanolamine + phosphate. The catalysed reaction is N-phosphocreatine + H2O = creatine + phosphate. The enzyme catalyses ATP + H2O = ADP + phosphate + H(+). It catalyses the reaction ADP + H2O = AMP + phosphate + H(+). It carries out the reaction AMP + H2O = adenosine + phosphate. With respect to regulation, phosphatase activity is specifically inhibited by 5-((5-chloro-2-methoxyphenyl)sulfonamido)nicotinamide (SBI-425). Its function is as follows. Alkaline phosphatase that metabolizes various phosphate compounds and plays a key role in skeletal mineralization and adaptive thermogenesis. Has broad substrate specificity and can hydrolyze a considerable variety of compounds: however, only a few substrates, such as diphosphate (inorganic pyrophosphate; PPi), pyridoxal 5'-phosphate (PLP) and N-phosphocreatine are natural substrates. Plays an essential role in skeletal and dental mineralization via its ability to hydrolyze extracellular diphosphate, a potent mineralization inhibitor, to phosphate: it thereby promotes hydroxyapatite crystal formation and increases inorganic phosphate concentration. Acts in a non-redundant manner with PHOSPHO1 in skeletal mineralization: while PHOSPHO1 mediates the initiation of hydroxyapatite crystallization in the matrix vesicles (MVs), ALPL/TNAP catalyzes the spread of hydroxyapatite crystallization in the extracellular matrix. Also promotes dephosphorylation of osteopontin (SSP1), an inhibitor of hydroxyapatite crystallization in its phosphorylated state; it is however unclear whether ALPL/TNAP mediates SSP1 dephosphorylation via a direct or indirect manner. Catalyzes dephosphorylation of PLP to pyridoxal (PL), the transportable form of vitamin B6, in order to provide a sufficient amount of PLP in the brain, an essential cofactor for enzymes catalyzing the synthesis of diverse neurotransmitters. Additionally, also able to mediate ATP degradation in a stepwise manner to adenosine, thereby regulating the availability of ligands for purinergic receptors. Also capable of dephosphorylating microbial products, such as lipopolysaccharides (LPS) as well as other phosphorylated small-molecules, such as poly-inosine:cytosine (poly I:C). Acts as a key regulator of adaptive thermogenesis as part of the futile creatine cycle: localizes to the mitochondria of thermogenic fat cells and acts by mediating hydrolysis of N-phosphocreatine to initiate a futile cycle of creatine dephosphorylation and phosphorylation. During the futile creatine cycle, creatine and N-phosphocreatine are in a futile cycle, which dissipates the high energy charge of N-phosphocreatine as heat without performing any mechanical or chemical work. This chain is Alkaline phosphatase, tissue-nonspecific isozyme (ALPL), found in Felis catus (Cat).